The primary structure comprises 88 residues: Small ribosomal subunit protein bS16 (88 aa).

The protein belongs to the bacterial ribosomal protein bS16 family.

The sequence is that of Small ribosomal subunit protein bS16 from Mesomycoplasma hyopneumoniae (strain 232) (Mycoplasma hyopneumoniae).